The following is a 918-amino-acid chain: NEDD4-like E3 ubiquitin-protein ligase WWP1 (918 aa).

The 116-residue stretch at 1 to 116 folds into the C2 domain; it reads MATASPRSDT…THNRKLEKVK (116 aa). Composition is skewed to polar residues over residues 150-164, 209-219, and 235-258; these read TNRS…QQNG, NGENTPSSPSQ, and SAPT…STMG. Disordered stretches follow at residues 150–182 and 209–360; these read TNRS…PRLP and NGEN…PHGR. Over residues 266–281 the composition is skewed to low complexity; it reads TTSTSNCTSTTTQEPP. 4 WW domains span residues 345–378, 377–410, 452–485, and 492–525; these read EALP…RPQP, QPLP…RPTM, GPLP…DPRT, and EPLP…DPRN. The segment at 345-525 is interaction with ERBB4; it reads EALPSGWEQR…RTTTFKDPRN (181 aa). The interval 345–527 is required for interaction with and ubiquitination of AMOTL2. Required for interaction with YAP1; that stretch reads EALPSGWEQR…TTFKDPRNGK (183 aa). The HECT domain maps to 584 to 918; sequence KPYDLRRRLY…IEETEGFGQE (335 aa). Cys-886 acts as the Glycyl thioester intermediate in catalysis.

Interacts with the Crumbs complex components PALS1 and PATJ; interaction with the Crumbs complex is enhanced by WWP1's interaction with AMOTL2 and facilitates WWP1 localization to the plasma membrane. Interaction with the Crumbs complex promotes WWP1 monoubiquitination of AMOTL2, which activates the Hippo signaling pathway. Binds SCNN1A, SCNN1B, SCNN1G, WBP1, WBP2, DRPLA and adenovirus type 2 PIII. Interacts with TGIF. Binds KLF2 AND HIVEP3. Interacts with RNF11. Interacts with SPART. Interacts with NDFIP1 and NDFIP2; this interaction activates the E3 ubiquitin-protein ligase. Interacts with ERBB4 isoforms JM-B CYT-1 and JM-A CYT-1. Does not interact with ERB4 isoform JMA-A CYT-2. Interacts with SMAD1, SMAD2, SMAD3, SMAD5, SMAD6, SMAD7, TGFBR1 and TGFBR2. Associates with the TGFBR1:TGFBR2 receptor complex in presence of SMAD7. Interacts with SKIL isoform 1. Interacts with TP63 isoform 1 and isoform 2. Interacts (via WW domains) with ARRDC1, ARRDC2 and ARRDC3. Post-translationally, auto-ubiquitinated and ubiquitinated by RNF11.

It localises to the cytoplasm. The protein localises to the cell membrane. The protein resides in the nucleus. Its subcellular location is the cell junction. The enzyme catalyses S-ubiquitinyl-[E2 ubiquitin-conjugating enzyme]-L-cysteine + [acceptor protein]-L-lysine = [E2 ubiquitin-conjugating enzyme]-L-cysteine + N(6)-ubiquitinyl-[acceptor protein]-L-lysine.. It functions in the pathway protein modification; protein ubiquitination. Its activity is regulated as follows. Activated by NDFIP1- and NDFIP2-binding. In terms of biological role, E3 ubiquitin-protein ligase which accepts ubiquitin from an E2 ubiquitin-conjugating enzyme in the form of a thioester and then directly transfers the ubiquitin to targeted substrates. Ubiquitinates and promotes degradation of SMAD2 in response to TGF-beta signaling, which requires interaction with TGIF. Ubiquitinates ERBB4 isoforms JM-A CYT-1 and JM-B CYT-1, KLF2, KLF5 and TP63 and promotes their proteasomal degradation. Ubiquitinates RNF11 without targeting it for degradation. Ubiquitinates and promotes degradation of TGFBR1; the ubiquitination is enhanced by SMAD7. Ubiquitinates SMAD6 and SMAD7. Activates the Hippo signaling pathway in response to cell contact inhibition and recruitment to the Crumbs complex at the cell membrane. Monoubiquitinates AMOTL2 which facilitates its interaction with and activation of LATS2. LATS2 then phosphorylates YAP1, excluding it from the nucleus and therefore ultimately represses YAP1-driven transcription of target genes. The chain is NEDD4-like E3 ubiquitin-protein ligase WWP1 (Wwp1) from Mus musculus (Mouse).